A 109-amino-acid chain; its full sequence is Defensin-B5 (109 aa).

Residues 1-20 form the signal peptide; sequence MRGLLPFLFLLSFFLSPIQA. Residues 21–44 form a disordered region; sequence QPEGREEELEETWSEDRDQAPPRV. The propeptide occupies 21–70; it reads QPEGREEELEETWSEDRDQAPPRVVEESEVVGAENEAGLAAGRSYPWIIL. Basic and acidic residues predominate over residues 34-44; that stretch reads SEDRDQAPPRV. Cystine bridges form between Cys-73-Cys-101, Cys-80-Cys-95, and Cys-85-Cys-102. A propeptide spanning residues 107–109 is cleaved from the precursor; sequence AVP.

This sequence belongs to the beta-defensin family. Highly expressed in kidney, and expressed at lower levels in testis.

Its subcellular location is the secreted. In terms of biological role, has antimicrobial activity. In Ornithorhynchus anatinus (Duckbill platypus), this protein is Defensin-B5.